The sequence spans 48 residues: AGTAPADLTVAQLESLKEVCEANLACEHMMDVSGIIAAYTAYYGPIPY.

The 44-residue stretch at 1–44 (AGTAPADLTVAQLESLKEVCEANLACEHMMDVSGIIAAYTAYYG) folds into the Gla domain. Residues E14, E18, E21, and E27 each contribute to the Ca(2+) site. Residues E14, E18, and E21 each carry the 4-carboxyglutamate modification. Cysteines 20 and 26 form a disulfide.

It belongs to the osteocalcin/matrix Gla protein family. Gamma-carboxyglutamate residues are formed by vitamin K dependent carboxylation by GGCX. These residues are essential for the binding of calcium.

The protein localises to the secreted. The protein resides in the extracellular space. It is found in the extracellular matrix. Functionally, the carboxylated form is one of the main organic components of the bone matrix, which constitutes 1-2% of the total bone protein. The carboxylated form binds strongly to apatite and calcium. In Cyprinus carpio (Common carp), this protein is Osteocalcin (bglap).